The primary structure comprises 306 residues: Glutamyl-Q tRNA(Asp) synthetase (306 aa).

Residues 29-33 and Asp-65 each bind L-glutamate; that span reads RFAPS. The short motif at 32–42 is the 'HIGH' region element; it reads PSPTGPLHLGN. Positions 121, 123, 141, and 145 each coordinate Zn(2+). L-glutamate-binding residues include Tyr-188 and Arg-206. A 'KMSKS' region motif is present at residues 244–248; it reads KLAKR. Lys-247 is a binding site for ATP.

Belongs to the class-I aminoacyl-tRNA synthetase family. GluQ subfamily. It depends on Zn(2+) as a cofactor.

Its function is as follows. Catalyzes the tRNA-independent activation of glutamate in presence of ATP and the subsequent transfer of glutamate onto a tRNA(Asp). Glutamate is transferred on the 2-amino-5-(4,5-dihydroxy-2-cyclopenten-1-yl) moiety of the queuosine in the wobble position of the QUC anticodon. The sequence is that of Glutamyl-Q tRNA(Asp) synthetase from Prochlorococcus marinus (strain MIT 9303).